We begin with the raw amino-acid sequence, 259 residues long: Haloacid dehalogenase-like hydrolase domain-containing protein 2 (259 aa).

Mg(2+) is bound by residues Asp13 and Ser15. Residues 13-15 (DLS) and 46-47 (TN) each bind substrate. A coiled-coil region spans residues 47 to 71 (NTTKESKQDLLERLRKLEFDISEDE). N6-succinyllysine is present on Lys50. Lys179 lines the substrate pocket. Asp204 provides a ligand contact to Mg(2+).

The protein belongs to the HAD-like hydrolase superfamily. It depends on Mg(2+) as a cofactor.

The polypeptide is Haloacid dehalogenase-like hydrolase domain-containing protein 2 (HDHD2) (Homo sapiens (Human)).